A 156-amino-acid polypeptide reads, in one-letter code: MMVLDKEDGVPMLSVQPKGKQKGCAGCNRKIKDRYLLKALDQYWHEDCLKCACCDCRLGEVGSTLYTKANLILCRRDYLRLFGTTGNCAACSKLIPAFEMVMRARDNVYHLDCFACQLCNQRFCVGDKFFLKNNMILCQMDYEEGQLNGTFDSHVQ.

2 LIM zinc-binding domains span residues 22-84 (KGCA…LFGT) and 86-148 (GNCA…GQLN).

In terms of tissue distribution, expressed in the brain and not in the thymus.

It localises to the nucleus. In terms of biological role, may be involved in gene regulation within neural lineage cells potentially by direct DNA binding or by binding to other transcription factors. The protein is Rhombotin-1 (LMO1) of Bos taurus (Bovine).